Reading from the N-terminus, the 362-residue chain is 5'-tyrosyl-DNA phosphodiesterase (362 aa).

The span at 1-10 (MSNSDDEIQE) shows a compositional bias: acidic residues. Positions 1-43 (MSNSDDEIQEIEAKRQKMSQEDSEVEIEILDEPEQGKLKNSSM) are disordered. Over residues 11–20 (IEAKRQKMSQ) the composition is skewed to basic and acidic residues. Positions 21-33 (EDSEVEIEILDEP) are enriched in acidic residues. The interval 126–130 (NIDGL) is interaction with 5' end of substrate DNA. Mg(2+)-binding residues include D128 and E158. Positions 232–237 (HLESTR) are interaction with 5' end of substrate DNA. The Proton donor/acceptor role is filled by D271. Residues 273 to 275 (NLR) form an interaction with 5' end of substrate DNA region.

It belongs to the CCR4/nocturin family. TTRAP/TDP2 subfamily. Interacts with mxl-1; the interaction promotes axon regeneration after injury. Interacts with ets-4; the interaction is required for the sumoylation of ets-4. Requires Mg(2+) as cofactor. Mn(2+) serves as cofactor.

The protein localises to the nucleus. Its subcellular location is the PML body. DNA repair enzyme that can remove a variety of covalent adducts from DNA through hydrolysis of a 5'-phosphodiester bond, giving rise to DNA with a free 5' phosphate. Catalyzes the hydrolysis of dead-end complexes between DNA and the topoisomerase 2 (top2) active site tyrosine residue. Hydrolyzes 5'-phosphoglycolates on protruding 5' ends on DNA double-strand breaks (DSBs) due to DNA damage by radiation and free radicals. Inhibits axon regeneration after neuronal injury by promoting the sumoylation of ets-4, thereby inhibiting the phosphorylation of ets-4 required for probable interaction with cebp-1 and activation of svh-2 expression. This Caenorhabditis elegans protein is 5'-tyrosyl-DNA phosphodiesterase.